We begin with the raw amino-acid sequence, 373 residues long: 4-hydroxy-3-methylbut-2-en-1-yl diphosphate synthase (flavodoxin) (373 aa).

Cys270, Cys273, Cys305, and Glu312 together coordinate [4Fe-4S] cluster.

Belongs to the IspG family. It depends on [4Fe-4S] cluster as a cofactor.

It catalyses the reaction (2E)-4-hydroxy-3-methylbut-2-enyl diphosphate + oxidized [flavodoxin] + H2O + 2 H(+) = 2-C-methyl-D-erythritol 2,4-cyclic diphosphate + reduced [flavodoxin]. Its pathway is isoprenoid biosynthesis; isopentenyl diphosphate biosynthesis via DXP pathway; isopentenyl diphosphate from 1-deoxy-D-xylulose 5-phosphate: step 5/6. In terms of biological role, converts 2C-methyl-D-erythritol 2,4-cyclodiphosphate (ME-2,4cPP) into 1-hydroxy-2-methyl-2-(E)-butenyl 4-diphosphate. The polypeptide is 4-hydroxy-3-methylbut-2-en-1-yl diphosphate synthase (flavodoxin) (Klebsiella pneumoniae subsp. pneumoniae (strain ATCC 700721 / MGH 78578)).